A 157-amino-acid polypeptide reads, in one-letter code: ATP synthase subunit b 1 (157 aa).

A helical membrane pass occupies residues 7 to 29; sequence LFGQMVTFALLVWFTMKYVWPPL.

It belongs to the ATPase B chain family. As to quaternary structure, F-type ATPases have 2 components, F(1) - the catalytic core - and F(0) - the membrane proton channel. F(1) has five subunits: alpha(3), beta(3), gamma(1), delta(1), epsilon(1). F(0) has three main subunits: a(1), b(2) and c(10-14). The alpha and beta chains form an alternating ring which encloses part of the gamma chain. F(1) is attached to F(0) by a central stalk formed by the gamma and epsilon chains, while a peripheral stalk is formed by the delta and b chains.

Its subcellular location is the cell inner membrane. Its function is as follows. F(1)F(0) ATP synthase produces ATP from ADP in the presence of a proton or sodium gradient. F-type ATPases consist of two structural domains, F(1) containing the extramembraneous catalytic core and F(0) containing the membrane proton channel, linked together by a central stalk and a peripheral stalk. During catalysis, ATP synthesis in the catalytic domain of F(1) is coupled via a rotary mechanism of the central stalk subunits to proton translocation. In terms of biological role, component of the F(0) channel, it forms part of the peripheral stalk, linking F(1) to F(0). This is ATP synthase subunit b 1 from Methylococcus capsulatus (strain ATCC 33009 / NCIMB 11132 / Bath).